We begin with the raw amino-acid sequence, 61 residues long: Large ribosomal subunit protein bL28 (61 aa).

The protein belongs to the bacterial ribosomal protein bL28 family.

The polypeptide is Large ribosomal subunit protein bL28 (Geobacillus kaustophilus (strain HTA426)).